Consider the following 498-residue polypeptide: ATP synthase subunit beta, chloroplastic (498 aa).

An ATP-binding site is contributed by 172 to 179 (GGAGVGKT).

The protein belongs to the ATPase alpha/beta chains family. As to quaternary structure, F-type ATPases have 2 components, CF(1) - the catalytic core - and CF(0) - the membrane proton channel. CF(1) has five subunits: alpha(3), beta(3), gamma(1), delta(1), epsilon(1). CF(0) has four main subunits: a(1), b(1), b'(1) and c(9-12).

It is found in the plastid. The protein localises to the chloroplast thylakoid membrane. The catalysed reaction is ATP + H2O + 4 H(+)(in) = ADP + phosphate + 5 H(+)(out). Its function is as follows. Produces ATP from ADP in the presence of a proton gradient across the membrane. The catalytic sites are hosted primarily by the beta subunits. The chain is ATP synthase subunit beta, chloroplastic from Cinnamomum camphora (Camphor tree).